The following is a 183-amino-acid chain: Oligoribonuclease (183 aa).

The 164-residue stretch at 8 to 171 (LIWIDLEMTG…DDIRDSIHEL (164 aa)) folds into the Exonuclease domain. Y129 is a catalytic residue.

The protein belongs to the oligoribonuclease family.

It localises to the cytoplasm. Its function is as follows. 3'-to-5' exoribonuclease specific for small oligoribonucleotides. In Halorhodospira halophila (strain DSM 244 / SL1) (Ectothiorhodospira halophila (strain DSM 244 / SL1)), this protein is Oligoribonuclease.